Consider the following 205-residue polypeptide: tRNA (guanine-N(7)-)-methyltransferase (205 aa).

Residues glutamate 36, glutamate 61, aspartate 88, and aspartate 109 each coordinate S-adenosyl-L-methionine. Aspartate 109 is an active-site residue. Lysine 113 is a substrate binding site. Residues 115–120 form an interaction with RNA region; that stretch reads RHEKRR. Residues aspartate 145 and 183–186 each bind substrate; that span reads TGYE.

The protein belongs to the class I-like SAM-binding methyltransferase superfamily. TrmB family.

The catalysed reaction is guanosine(46) in tRNA + S-adenosyl-L-methionine = N(7)-methylguanosine(46) in tRNA + S-adenosyl-L-homocysteine. It functions in the pathway tRNA modification; N(7)-methylguanine-tRNA biosynthesis. Catalyzes the formation of N(7)-methylguanine at position 46 (m7G46) in tRNA. This chain is tRNA (guanine-N(7)-)-methyltransferase, found in Mycoplasmopsis agalactiae (strain NCTC 10123 / CIP 59.7 / PG2) (Mycoplasma agalactiae).